Reading from the N-terminus, the 303-residue chain is MADDQGCIEEQGVEDSANEDSVDAKPDRSSFVPSLFSKKKKNVTMRSIKTTRDRVPTYQYNMNFEKLGKCIIINNKNFDKVTGMGVRNGTDKDAEALFKCFRSLGFDVIVYNDCSCAKMQDLLKKASEEDHTNAACFACILLSHGEENVIYGKDGVTPIKDLTAHFRGDRCKTLLEKPKLFFIQACRGTELDDGIQADSGPINDTDANPRYKIPVEADFLFAYSTVPGYYSWRSPGRGSWFVQALCSILEEHGKDLEIMQILTRVNDRVARHFESQSDDPHFHEKKQIPCVVSMLTKELYFSQ.

Over residues 1 to 21 (MADDQGCIEEQGVEDSANEDS) the composition is skewed to acidic residues. Residues 1–30 (MADDQGCIEEQGVEDSANEDSVDAKPDRSS) are disordered. Residue Ala2 is modified to N-acetylalanine. A propeptide spans 2 to 23 (ADDQGCIEEQGVEDSANEDSVD) (N-terminally processed). Ser30 carries the phosphoserine; by PAK2 modification. Ser37 carries the post-translational modification Phosphoserine. The exosite stretch occupies residues 38 to 41 (KKKK). The segment at 76–87 (KNFDKVTGMGVR) is loop L1. His144 is an active-site residue. Thr173 carries the post-translational modification Phosphothreonine; by PAK2. Residue Cys186 is part of the active site. The tract at residues 187–196 (RGTELDDGIQ) is loop L2. Residues 199–206 (SGPINDTD) constitute a propeptide that is removed on maturation. Residues 226 to 238 (VPGYYSWRSPGRG) are loop L3. Residue Arg233 is modified to (Microbial infection) ADP-riboxanated arginine. Position 239 is a phosphoserine; by PAK2 (Ser239). The segment at 274 to 288 (ESQSDDPHFHEKKQI) is loop L4.

It belongs to the peptidase C14A family. In terms of assembly, heterotetramer that consists of two anti-parallel arranged heterodimers, each one formed by a 20 kDa (p20) and a 11 kDa (p11) subunit. Interacts with XIAP (via its second BIR domain); inhibiting CASP7 activity. Interacts with BIRC6/bruce. Interacts with ATXN3 (short isoform 1). Interacts with HSPA5. In terms of processing, cleavage by different proteases, such as granzyme B (GZMB), caspase-1 (CASP1), caspase-8 (CASP8), caspase-9 (CASP9) or caspase-10 (CASP10) generate the two active subunits. Its involvement in different programmed cell death processes is probably specified by the protease that activates CASP7. Cleaved and activated by initiator caspases (CASP8, CASP9 and/or CASP10), leading to execution phase of apoptosis. Cleavage and maturation by GZMB regulates granzyme-mediated programmed cell death. Cleaved and activated by CASP1 in response to bacterial infection. Propeptide domains can also be cleaved efficiently by CASP3. Active heterodimers between the small subunit of caspase-7 and the large subunit of CASP3, and vice versa, also occur. Also cleaved at the N-terminus at alternative sites by CAPN1, leading to its activation. Phosphorylation at Ser-30 and Ser-239 by PAK2 inhibits its activity. Phosphorylation at Ser-30 prevents cleavage and activation by initiator caspase CASP9, while phosphorylation at Ser-239 prevents thiol protease activity by preventing substrate-binding. Post-translationally, (Microbial infection) ADP-riboxanation by C.violaceum CopC blocks CASP7 processing, preventing CASP7 activation and ability to recognize and cleave substrates. In terms of processing, ubiquitinated by BIRC6; this activity is inhibited by DIABLO/SMAC. As to expression, highly expressed in lung, skeletal muscle, liver, kidney, spleen and heart, and moderately in testis. No expression in the brain.

Its subcellular location is the cytoplasm. The protein resides in the cytosol. The protein localises to the nucleus. It is found in the secreted. It localises to the extracellular space. The enzyme catalyses Strict requirement for an Asp residue at position P1 and has a preferred cleavage sequence of Asp-Glu-Val-Asp-|-.. During activation, the N-terminal disordered prodomain is removed by cleavage. Concomitantly, double cleavage gives rise to a large Caspase-7 subunit p20 and a small Caspase-7 subunit p11. The two large and two small subunits then assemble to form the active CASP7 complex. Can be cleaved and activated by different caspases, depending on the context. Cleaved and activated by initiator caspases (CASP8, CASP9 and/or CASP10), leading to execution phase of apoptosis. Inhibited by XIAP, which directly binds to the active site pocket and obstructs substrate entry. Cleavage and maturation by GZMB regulates granzyme-mediated programmed cell death. Cleavage and maturation by CASP1 regulates pyroptosis. Phosphorylation at Ser-30 and Ser-239 by PAK2 inhibits its activity. Inhibited by isatin sulfonamides. Inhibited by 2-(2,4-Dichlorophenoxy)- N-(2-mercapto-ethyl)-acetamide (DICA) and 5-Fluoro-1H-indole-2- carboxylic acid (2-mercapto-ethyl)-amide (FICA) allosteric inhibitors, which disrupt an interaction between Arg-187 and Tyr-223. Specifically inhibited by DARPin D7.18 and D7.43, which specifically bind to the precursor CASP7 and prevent its processing and activation. Inhibited by BIRC6; following inhibition of BIRC6-caspase binding by DIABLO/SMAC, BIRC6 is subjected to caspase cleavage, leading to an increase in active caspases. In terms of biological role, thiol protease involved in different programmed cell death processes, such as apoptosis, pyroptosis or granzyme-mediated programmed cell death, by proteolytically cleaving target proteins. Has a marked preference for Asp-Glu-Val-Asp (DEVD) consensus sequences, with some plasticity for alternate non-canonical sequences. Its involvement in the different programmed cell death processes is probably determined by upstream proteases that activate CASP7. Acts as an effector caspase involved in the execution phase of apoptosis: following cleavage and activation by initiator caspases (CASP8, CASP9 and/or CASP10), mediates execution of apoptosis by catalyzing cleavage of proteins, such as CLSPN, PARP1, PTGES3 and YY1. Compared to CASP3, acts as a minor executioner caspase and cleaves a limited set of target proteins. Acts as a key regulator of the inflammatory response in response to bacterial infection by catalyzing cleavage and activation of the sphingomyelin phosphodiesterase SMPD1 in the extracellular milieu, thereby promoting membrane repair. Regulates pyroptosis in intestinal epithelial cells: cleaved and activated by CASP1 in response to S.typhimurium infection, promoting its secretion to the extracellular milieu, where it catalyzes activation of SMPD1, generating ceramides that repair membranes and counteract the action of gasdermin-D (GSDMD) pores. Regulates granzyme-mediated programmed cell death in hepatocytes: cleaved and activated by granzyme B (GZMB) in response to bacterial infection, promoting its secretion to the extracellular milieu, where it catalyzes activation of SMPD1, generating ceramides that repair membranes and counteract the action of perforin (PRF1) pores. Following cleavage by CASP1 in response to inflammasome activation, catalyzes processing and inactivation of PARP1, alleviating the transcription repressor activity of PARP1. Acts as an inhibitor of type I interferon production during virus-induced apoptosis by mediating cleavage of antiviral proteins CGAS, IRF3 and MAVS, thereby preventing cytokine overproduction. Cleaves and activates sterol regulatory element binding proteins (SREBPs). Cleaves phospholipid scramblase proteins XKR4, XKR8 and XKR9. In case of infection, catalyzes cleavage of Kaposi sarcoma-associated herpesvirus protein ORF57, thereby preventing expression of viral lytic genes. Cleaves BIRC6 following inhibition of BIRC6-caspase binding by DIABLO/SMAC. Its function is as follows. Lacks enzymatic activity. The protein is Caspase-7 of Homo sapiens (Human).